The chain runs to 354 residues: Rhodopsin (354 aa).

The Extracellular portion of the chain corresponds to 1–36 (MNGTEGPNFYVPMSNKTGIVRSPFEYPQYYLAEPWK). N-linked (GlcNAc...) asparagine glycans are attached at residues Asn-2 and Asn-15. Residues 37-61 (YSVLAAYMFLLILLGLPINFMTLYV) form a helical membrane-spanning segment. The Cytoplasmic segment spans residues 62 to 73 (TIQHKKLRTPLN). Residues 74–96 (YILLNLAFANHFMVLCGFTITMY) traverse the membrane as a helical segment. Residues 97–110 (TSLHGYFVFGQTGC) are Extracellular-facing. Cys-110 and Cys-187 are joined by a disulfide. The chain crosses the membrane as a helical span at residues 111–133 (YFEGFFATLGGEIALWSLVVLAI). The 'Ionic lock' involved in activated form stabilization motif lies at 134–136 (ERY). Residues 134-152 (ERYIVVCKPMSNFRFGENH) are Cytoplasmic-facing. Residues 153–173 (AMMGVAFTWIMALACAVPPLF) traverse the membrane as a helical segment. Residues 174–202 (GWSRYIPEGMQCSCGVDYYTLKPEVNNES) are Extracellular-facing. Residues 203 to 224 (FVIYMFVVHFLIPLIIISFCYG) form a helical membrane-spanning segment. Residues 225 to 252 (RLVCTVKEAAAQQQESATTQKAEKEVTR) are Cytoplasmic-facing. A helical transmembrane segment spans residues 253–274 (MVVIMVIFFLICWVPYAYVAFY). Residues 275-286 (IFTHQGSEFGPI) are Extracellular-facing. Residues 287-308 (FMTVPAFFAKSSAIYNPVIYIM) traverse the membrane as a helical segment. An N6-(retinylidene)lysine modification is found at Lys-296. Residues 309 to 354 (LNKQFRNCMITTLCCGKNPFGDEDASSAATSKTEATSVSTSQVSPA) lie on the Cytoplasmic side of the membrane. S-palmitoyl cysteine attachment occurs at residues Cys-322 and Cys-323. A disordered region spans residues 331–354 (EDASSAATSKTEATSVSTSQVSPA). A compositionally biased stretch (low complexity) spans 334–354 (SSAATSKTEATSVSTSQVSPA).

The protein belongs to the G-protein coupled receptor 1 family. Opsin subfamily. In terms of processing, contains one covalently linked retinal chromophore. Upon light absorption, the covalently bound 11-cis-retinal is converted to all-trans-retinal. After hydrolysis of the Schiff base and release of the covalently bound all-trans-retinal, active rhodopsin is regenerated by binding of a fresh molecule of 11-cis-retinal. As to expression, retina. Localized in the ventral part of the retina.

Its subcellular location is the membrane. The protein resides in the cell projection. It localises to the cilium. It is found in the photoreceptor outer segment. Photoreceptor required for image-forming vision at low light intensity. Required for photoreceptor cell viability after birth. May use a mixture of retinal and 3-dehydroretinal as visual pigment. Light-induced isomerization of 11-cis to all-trans retinal triggers a conformational change that activates signaling via G-proteins. Subsequent receptor phosphorylation mediates displacement of the bound G-protein alpha subunit by arrestin and terminates signaling. This Aquarana catesbeiana (American bullfrog) protein is Rhodopsin (RHO).